Consider the following 444-residue polypeptide: ATP-dependent protease ATPase subunit HslU (444 aa).

Residues Ile18, 60 to 65, Asp257, Glu322, and Arg394 each bind ATP; that span reads GVGKTE.

Belongs to the ClpX chaperone family. HslU subfamily. In terms of assembly, a double ring-shaped homohexamer of HslV is capped on each side by a ring-shaped HslU homohexamer. The assembly of the HslU/HslV complex is dependent on binding of ATP.

Its subcellular location is the cytoplasm. In terms of biological role, ATPase subunit of a proteasome-like degradation complex; this subunit has chaperone activity. The binding of ATP and its subsequent hydrolysis by HslU are essential for unfolding of protein substrates subsequently hydrolyzed by HslV. HslU recognizes the N-terminal part of its protein substrates and unfolds these before they are guided to HslV for hydrolysis. The sequence is that of ATP-dependent protease ATPase subunit HslU from Psychromonas ingrahamii (strain DSM 17664 / CCUG 51855 / 37).